The sequence spans 198 residues: NADH-quinone oxidoreductase subunit C (198 aa).

The protein belongs to the complex I 30 kDa subunit family. In terms of assembly, NDH-1 is composed of 14 different subunits. Subunits NuoB, C, D, E, F, and G constitute the peripheral sector of the complex.

It localises to the cell inner membrane. It carries out the reaction a quinone + NADH + 5 H(+)(in) = a quinol + NAD(+) + 4 H(+)(out). Functionally, NDH-1 shuttles electrons from NADH, via FMN and iron-sulfur (Fe-S) centers, to quinones in the respiratory chain. The immediate electron acceptor for the enzyme in this species is believed to be ubiquinone. Couples the redox reaction to proton translocation (for every two electrons transferred, four hydrogen ions are translocated across the cytoplasmic membrane), and thus conserves the redox energy in a proton gradient. This chain is NADH-quinone oxidoreductase subunit C, found in Janthinobacterium sp. (strain Marseille) (Minibacterium massiliensis).